A 251-amino-acid polypeptide reads, in one-letter code: tRNA (guanine-N(1)-)-methyltransferase (251 aa).

S-adenosyl-L-methionine contacts are provided by residues Gly113 and 133–138 (MGDYVL).

Belongs to the RNA methyltransferase TrmD family. In terms of assembly, homodimer.

It is found in the cytoplasm. The enzyme catalyses guanosine(37) in tRNA + S-adenosyl-L-methionine = N(1)-methylguanosine(37) in tRNA + S-adenosyl-L-homocysteine + H(+). Its function is as follows. Specifically methylates guanosine-37 in various tRNAs. This Sodalis glossinidius (strain morsitans) protein is tRNA (guanine-N(1)-)-methyltransferase.